The sequence spans 20 residues: Trypsin inhibitor (20 aa).

Residues alanine 1 to aspartate 20 are disordered.

Hemolymph.

The protein localises to the secreted. Its subcellular location is the extracellular space. Functionally, inhibits trypsin stoichiometrically. Also inhibits chymotrypsin very weakly. This Mythimna unipuncta (Armyworm moth) protein is Trypsin inhibitor.